The primary structure comprises 474 residues: Glutathione synthetase (474 aa).

Position 125 (R125) interacts with substrate. Residue E144 participates in ATP binding. Mg(2+) contacts are provided by E144 and N146. Substrate-binding positions include 148 to 151, 214 to 216, Q220, and 267 to 270; these read IAAS, QRN, and RTGY. Residues K305, 364-373, Y375, 398-401, and E425 contribute to the ATP site; these read KPQREGGGNN and MDKI. E368 contributes to the Mg(2+) binding site. R450 provides a ligand contact to substrate. 2 residues coordinate ATP: K452 and D458. Residue 461 to 462 participates in substrate binding; that stretch reads VA.

It belongs to the eukaryotic GSH synthase family. In terms of assembly, homodimer. The cofactor is Mg(2+). As to expression, expressed ubiquitously.

It catalyses the reaction gamma-L-glutamyl-L-cysteine + glycine + ATP = glutathione + ADP + phosphate + H(+). The catalysed reaction is gamma-L-glutamyl-(2S)-2-aminobutanoate + glycine + ATP = ophthalmate + ADP + phosphate + H(+). It functions in the pathway sulfur metabolism; glutathione biosynthesis; glutathione from L-cysteine and L-glutamate: step 2/2. Catalyzes the production of glutathione from gamma-glutamylcysteine and glycine in an ATP-dependent manner. Glutathione (gamma-glutamylcysteinylglycine, GSH) is the most abundant intracellular thiol in living aerobic cells and is required for numerous processes including the protection of cells against oxidative damage, amino acid transport, the detoxification of foreign compounds, the maintenance of protein sulfhydryl groups in a reduced state and acts as a cofactor for a number of enzymes. Participates in ophthalmate biosynthesis in hepatocytes. The polypeptide is Glutathione synthetase (Xenopus laevis (African clawed frog)).